The sequence spans 463 residues: Chromosomal replication initiator protein DnaA (463 aa).

Residues 1 to 84 (MNTNQIILTN…QLFQHYNNAI (84 aa)) are domain I, interacts with DnaA modulators. Residues 84–124 (IKTVEIITKELPASNQATLELPTKTFADIGSSELNSENIFS) are domain II. The segment at 125-343 (TFDIRFTFDN…GALNKVIAHS (219 aa)) is domain III, AAA+ region. Residues G171, G173, K174, and T175 each contribute to the ATP site. A domain IV, binds dsDNA region spans residues 344 to 463 (NFTAKEITLE…INLMMKILQN (120 aa)).

This sequence belongs to the DnaA family. In terms of assembly, oligomerizes as a right-handed, spiral filament on DNA at oriC.

The protein resides in the cytoplasm. Its function is as follows. Plays an essential role in the initiation and regulation of chromosomal replication. ATP-DnaA binds to the origin of replication (oriC) to initiate formation of the DNA replication initiation complex once per cell cycle. Binds the DnaA box (a 9 base pair repeat at the origin) and separates the double-stranded (ds)DNA. Forms a right-handed helical filament on oriC DNA; dsDNA binds to the exterior of the filament while single-stranded (ss)DNA is stabiized in the filament's interior. The ATP-DnaA-oriC complex binds and stabilizes one strand of the AT-rich DNA unwinding element (DUE), permitting loading of DNA polymerase. After initiation quickly degrades to an ADP-DnaA complex that is not apt for DNA replication. Binds acidic phospholipids. The polypeptide is Chromosomal replication initiator protein DnaA (Rickettsia bellii (strain OSU 85-389)).